We begin with the raw amino-acid sequence, 496 residues long: Solute carrier family 2, facilitated glucose transporter member 3 (496 aa).

Residues 1 to 11 (MADKKKITASL) lie on the Cytoplasmic side of the membrane. Residues 12–33 (IYAVSVAAIGSLQFGYNTGVIN) form a helical membrane-spanning segment. Over 34 to 65 (APEKIIQAFYNRTLSQRSGETISPELLTSLWS) the chain is Extracellular. Residue Asn44 is glycosylated (N-linked (GlcNAc...) asparagine). Residues 66-86 (LSVAIFSVGGMIGSFSVSLFF) traverse the membrane as a helical segment. The Cytoplasmic portion of the chain corresponds to 87–91 (NRFGR). A helical transmembrane segment spans residues 92–112 (RNSMLLVNVLAFAGGALMALS). Residues 113–119 (KIAKAVE) are Extracellular-facing. A helical transmembrane segment spans residues 120 to 143 (MLIIGRFIIGLFCGLCTGFVPMYI). The Cytoplasmic segment spans residues 144–154 (SEVSPTSLRGA). The helical transmembrane segment at 155 to 175 (FGTLNQLGIVVGILVAQIFGL) threads the bilayer. Position 160 (Gln160) interacts with D-glucose. Topologically, residues 176–184 (EGIMGTEAL) are extracellular. Residues 185–205 (WPLLLGFTIVPAVLQCVALLF) traverse the membrane as a helical segment. At 206 to 270 (CPESPRFLLI…LFRSPNYRQP (65 aa)) the chain is on the cytoplasmic side. A helical transmembrane segment spans residues 271 to 291 (IIISITLQLSQQLSGINAVFY). The segment at 278 to 280 (QLS) is important for selectivity against fructose. Residues 281-282 (QQ) and Asn287 each bind D-glucose. At 292–305 (YSTGIFERAGITQP) the chain is on the extracellular side. The chain crosses the membrane as a helical span at residues 306–326 (VYATIGAGVVNTVFTVVSLFL). D-glucose is bound at residue Asn316. The Cytoplasmic portion of the chain corresponds to 327–332 (VERAGR). A helical transmembrane segment spans residues 333–353 (RTLHLVGLGGMAVCAAVMTIA). Residues 354–362 (LALKEKWIR) are Extracellular-facing. A helical transmembrane segment spans residues 363-388 (YISIVATFGFVALFEIGPGPIPWFIV). Residues Glu377 and Trp385 each contribute to the D-glucose site. The Cytoplasmic segment spans residues 389-398 (AELFSQGPRP). A helical transmembrane segment spans residues 399-419 (AAMAVAGCSNWTSNFLVGMLF). Residues 420 to 428 (PYAEKLCGP) lie on the Extracellular side of the membrane. Residues 429-449 (YVFLIFLVFLLIFFIFTYFKV) traverse the membrane as a helical segment. The Cytoplasmic segment spans residues 450 to 496 (PETKGRTFEDISRGFEEQVETSSPSSPPIEKNPMVEMNSIEPDKEVA). Positions 464–496 (FEEQVETSSPSSPPIEKNPMVEMNSIEPDKEVA) are disordered.

This sequence belongs to the major facilitator superfamily. Sugar transporter (TC 2.A.1.1) family. Glucose transporter subfamily.

The protein localises to the cell membrane. Its subcellular location is the perikaryon. The protein resides in the cell projection. It catalyses the reaction D-glucose(out) = D-glucose(in). The catalysed reaction is D-galactose(in) = D-galactose(out). With respect to regulation, deoxyglucose transport is inhibited by D-glucose, D-galactose and maltose. Galactose transport is inhibited by D-glucose and maltose. In terms of biological role, facilitative glucose transporter. Can also mediate the uptake of various other monosaccharides across the cell membrane. Mediates the uptake of glucose, 2-deoxyglucose, galactose, mannose, xylose and fucose, and probably also dehydroascorbate. Does not mediate fructose transport. Required for mesendoderm differentiation. The chain is Solute carrier family 2, facilitated glucose transporter member 3 from Gallus gallus (Chicken).